Here is a 142-residue protein sequence, read N- to C-terminus: Putative pre-16S rRNA nuclease (142 aa).

Belongs to the YqgF nuclease family.

It localises to the cytoplasm. Could be a nuclease involved in processing of the 5'-end of pre-16S rRNA. In Lawsonia intracellularis (strain PHE/MN1-00), this protein is Putative pre-16S rRNA nuclease.